The following is a 347-amino-acid chain: uncharacterized protein (347 aa).

10 helical membrane passes run 6–26 (GSASQLAFVYVGTVVGAGFAT), 37–57 (FGWFGFFGILVSGGMFTLLGA), 90–110 (FMLFVLLGVTSVMLSGAGALF), 114–134 (LGMSAQIGMLITIGLSLIVMT), 140–160 (IFGVNVFVVPLLIIFSMIVVA), 182–202 (WLLSAVSYGALNLSLAQAVLV), 217–237 (GALIGGTMLTIVLSASFLSLS), 262–282 (LIYLLIIFGEVFTSVIGNLYG), 289–309 (SFLPVKSKYIFAAIMITAYIT), and 317–337 (LISTIYPLFGYVSLAFIGALL).

It localises to the cell membrane. This is an uncharacterized protein from Bacillus subtilis (strain 168).